The following is a 256-amino-acid chain: Peroxisomal membrane protein PMP30B (256 aa).

This sequence belongs to the peroxin-11 family.

The protein resides in the peroxisome membrane. In terms of biological role, involved in peroxisomal proliferation. Could participate in peroxisomal elongation or fission. May be involved in parceling of peroxisomes into regular quanta. This is Peroxisomal membrane protein PMP30B (PEX11B) from Candida boidinii (Yeast).